Consider the following 119-residue polypeptide: Large ribosomal subunit protein uL18 (119 aa).

Positions 1–10 are enriched in basic and acidic residues; that stretch reads MKKIKEAEQR. The segment at 1–20 is disordered; that stretch reads MKKIKEAEQRKLRRKKRIKD.

The protein belongs to the universal ribosomal protein uL18 family. As to quaternary structure, part of the 50S ribosomal subunit; part of the 5S rRNA/L5/L18/L25 subcomplex. Contacts the 5S and 23S rRNAs.

Its function is as follows. This is one of the proteins that bind and probably mediate the attachment of the 5S RNA into the large ribosomal subunit, where it forms part of the central protuberance. The polypeptide is Large ribosomal subunit protein uL18 (Borreliella burgdorferi (strain ATCC 35210 / DSM 4680 / CIP 102532 / B31) (Borrelia burgdorferi)).